Here is a 234-residue protein sequence, read N- to C-terminus: Protein spitz (234 aa).

The N-terminal stretch at 1–28 (MHSTMSVQHGLVALVLIGCLAHPWHVEA) is a signal peptide. Residues 29–143 (CSSRTVPKPR…RPRPMLEKAS (115 aa)) lie on the Lumenal side of the membrane. The interval 33–71 (TVPKPRSSISSSMSGTALPPTQAPVTSSTTMRTTTTTTP) is disordered. Positions 56-71 (PVTSSTTMRTTTTTTP) are enriched in low complexity. N-linked (GlcNAc...) asparagine glycosylation is present at asparagine 74. In terms of domain architecture, EGF-like spans 78-122 (PTYKCPETFDAWYCLNDAHCFAVKIADLPVYSCECAIGFMGQRCE). Disulfide bonds link cysteine 82–cysteine 97, cysteine 91–cysteine 110, and cysteine 112–cysteine 121. Residues 144 to 164 (IASGAMCALVFMLFVCLAFYL) traverse the membrane as a helical segment. Over 165–234 (RFEQRAAKKA…SFAIRRSNKL (70 aa)) the chain is Cytoplasmic.

As to quaternary structure, interacts with Star via the lumenal domain. In terms of processing, proteolytic processing by Rhomboid occurs in the Golgi. Cleavage takes place within the transmembrane domain close to residue 144 and the active growth factor is released. N-glycosylated and O-glycosylated. In terms of tissue distribution, expressed throughout the embryo.

It localises to the cell membrane. The protein resides in the endoplasmic reticulum membrane. The protein localises to the golgi apparatus membrane. Ligand for the EGF receptor (Gurken). Involved in a number of unrelated developmental choices, for example, dorsal-ventral axis formation, glial migration, sensory organ determination, and muscle development. It is required for photoreceptor determination. This is Protein spitz (spi) from Drosophila melanogaster (Fruit fly).